A 122-amino-acid chain; its full sequence is Large ribosomal subunit protein uL18 (122 aa).

It belongs to the universal ribosomal protein uL18 family. In terms of assembly, part of the 50S ribosomal subunit; part of the 5S rRNA/L5/L18/L25 subcomplex. Contacts the 5S and 23S rRNAs.

This is one of the proteins that bind and probably mediate the attachment of the 5S RNA into the large ribosomal subunit, where it forms part of the central protuberance. This chain is Large ribosomal subunit protein uL18, found in Mycobacterium tuberculosis (strain ATCC 25177 / H37Ra).